We begin with the raw amino-acid sequence, 360 residues long: 3-dehydroquinate synthase (360 aa).

Residues Asp-71–Lys-76, Gly-105–Asp-109, Thr-129–Thr-130, Lys-142, and Lys-151 contribute to the NAD(+) site. Residues Glu-184, His-247, and His-264 each coordinate Zn(2+).

This sequence belongs to the sugar phosphate cyclases superfamily. Dehydroquinate synthase family. Co(2+) is required as a cofactor. Zn(2+) serves as cofactor. The cofactor is NAD(+).

It localises to the cytoplasm. The enzyme catalyses 7-phospho-2-dehydro-3-deoxy-D-arabino-heptonate = 3-dehydroquinate + phosphate. The protein operates within metabolic intermediate biosynthesis; chorismate biosynthesis; chorismate from D-erythrose 4-phosphate and phosphoenolpyruvate: step 2/7. Functionally, catalyzes the conversion of 3-deoxy-D-arabino-heptulosonate 7-phosphate (DAHP) to dehydroquinate (DHQ). The chain is 3-dehydroquinate synthase from Azoarcus sp. (strain BH72).